A 333-amino-acid chain; its full sequence is Low specificity L-threonine aldolase (333 aa).

Residue K197 is modified to N6-(pyridoxal phosphate)lysine.

Belongs to the threonine aldolase family. Homotetramer. Pyridoxal 5'-phosphate serves as cofactor.

It catalyses the reaction L-threonine = acetaldehyde + glycine. The enzyme catalyses L-allo-threonine = acetaldehyde + glycine. Its function is as follows. Catalyzes the cleavage of L-allo-threonine and L-threonine to glycine and acetaldehyde. L-threo-phenylserine and L-erythro-phenylserine are also good substrates. The protein is Low specificity L-threonine aldolase (ltaE) of Escherichia coli O157:H7.